We begin with the raw amino-acid sequence, 155 residues long: Ribosome maturation factor RimP (155 aa).

It belongs to the RimP family.

The protein resides in the cytoplasm. Required for maturation of 30S ribosomal subunits. The sequence is that of Ribosome maturation factor RimP from Prochlorococcus marinus (strain MIT 9301).